The sequence spans 323 residues: Acetyl esterase (323 aa).

The short motif at 91–93 (HGG) is the Involved in the stabilization of the negatively charged intermediate by the formation of the oxyanion hole element. Active-site residues include Ser-165, Asp-262, and His-292.

Belongs to the 'GDXG' lipolytic enzyme family. Homodimer. Interacts with MalT and MelA.

The protein resides in the cytoplasm. In terms of biological role, displays esterase activity towards short chain fatty esters (acyl chain length of up to 8 carbons). Able to hydrolyze triacetylglycerol (triacetin) and tributyrylglycerol (tributyrin), but not trioleylglycerol (triolein) or cholesterol oleate. Negatively regulates MalT activity by antagonizing maltotriose binding. Inhibits MelA galactosidase activity. The chain is Acetyl esterase from Salmonella agona (strain SL483).